A 220-amino-acid polypeptide reads, in one-letter code: Deoxyribose-phosphate aldolase (220 aa).

D92 (proton donor/acceptor) is an active-site residue. The active-site Schiff-base intermediate with acetaldehyde is K157. Catalysis depends on K186, which acts as the Proton donor/acceptor.

This sequence belongs to the DeoC/FbaB aldolase family. DeoC type 1 subfamily.

It is found in the cytoplasm. The enzyme catalyses 2-deoxy-D-ribose 5-phosphate = D-glyceraldehyde 3-phosphate + acetaldehyde. It functions in the pathway carbohydrate degradation; 2-deoxy-D-ribose 1-phosphate degradation; D-glyceraldehyde 3-phosphate and acetaldehyde from 2-deoxy-alpha-D-ribose 1-phosphate: step 2/2. In terms of biological role, catalyzes a reversible aldol reaction between acetaldehyde and D-glyceraldehyde 3-phosphate to generate 2-deoxy-D-ribose 5-phosphate. The protein is Deoxyribose-phosphate aldolase of Caldicellulosiruptor saccharolyticus (strain ATCC 43494 / DSM 8903 / Tp8T 6331).